The sequence spans 148 residues: Wheatwin-2 (148 aa).

The signal sequence occupies residues 1-23; the sequence is MTMAARLMLVAALLCAAAAAATA. At Gln24 the chain carries Pyrrolidone carboxylic acid. Residues 24 to 148 form the Barwin domain; that stretch reads QQATNVRATY…VNYQFVDCRD (125 aa). 3 disulfides stabilise this stretch: Cys54-Cys86, Cys75-Cys109, and Cys89-Cys146.

In terms of assembly, monomer.

Functionally, shows antifungal activity towards B.cinerea and towards the wheat-specific pathogenic fungi F.culmorum and F.graminearum (groups 1 and 2). This is Wheatwin-2 (PR4B) from Triticum aestivum (Wheat).